The chain runs to 22 residues: Rothein 4.1 (22 aa).

The protein belongs to the frog skin active peptide (FSAP) family. Rothein subfamily. As to expression, expressed by the skin dorsal glands.

It is found in the secreted. Its function is as follows. Lacks antimicrobial activity. Does not inhibit the formation of NO by neuronal nitric oxide. This Litoria rothii (Roth's tree frog) protein is Rothein 4.1.